The chain runs to 300 residues: Phosphatidylserine decarboxylase proenzyme (300 aa).

Residues Asp117, His173, and Ser260 each act as charge relay system; for autoendoproteolytic cleavage activity in the active site. Ser260 (schiff-base intermediate with substrate; via pyruvic acid; for decarboxylase activity) is an active-site residue. Pyruvic acid (Ser); by autocatalysis is present on Ser260.

Belongs to the phosphatidylserine decarboxylase family. PSD-B subfamily. Prokaryotic type II sub-subfamily. As to quaternary structure, heterodimer of a large membrane-associated beta subunit and a small pyruvoyl-containing alpha subunit. Pyruvate serves as cofactor. Post-translationally, is synthesized initially as an inactive proenzyme. Formation of the active enzyme involves a self-maturation process in which the active site pyruvoyl group is generated from an internal serine residue via an autocatalytic post-translational modification. Two non-identical subunits are generated from the proenzyme in this reaction, and the pyruvate is formed at the N-terminus of the alpha chain, which is derived from the carboxyl end of the proenzyme. The autoendoproteolytic cleavage occurs by a canonical serine protease mechanism, in which the side chain hydroxyl group of the serine supplies its oxygen atom to form the C-terminus of the beta chain, while the remainder of the serine residue undergoes an oxidative deamination to produce ammonia and the pyruvoyl prosthetic group on the alpha chain. During this reaction, the Ser that is part of the protease active site of the proenzyme becomes the pyruvoyl prosthetic group, which constitutes an essential element of the active site of the mature decarboxylase.

Its subcellular location is the cell membrane. The catalysed reaction is a 1,2-diacyl-sn-glycero-3-phospho-L-serine + H(+) = a 1,2-diacyl-sn-glycero-3-phosphoethanolamine + CO2. It participates in phospholipid metabolism; phosphatidylethanolamine biosynthesis; phosphatidylethanolamine from CDP-diacylglycerol: step 2/2. Functionally, catalyzes the formation of phosphatidylethanolamine (PtdEtn) from phosphatidylserine (PtdSer). The sequence is that of Phosphatidylserine decarboxylase proenzyme from Fusobacterium nucleatum subsp. nucleatum (strain ATCC 25586 / DSM 15643 / BCRC 10681 / CIP 101130 / JCM 8532 / KCTC 2640 / LMG 13131 / VPI 4355).